The primary structure comprises 331 residues: Hyaluronidase A (331 aa).

Disulfide bonds link C19/C308 and C185/C197. N-linked (GlcNAc...) asparagine glycosylation is found at N79 and N99. The active-site Proton donor is E109. An N-linked (GlcNAc...) asparagine glycan is attached at N127. N325 is a glycosylation site (N-linked (GlcNAc...) asparagine).

It belongs to the glycosyl hydrolase 56 family. As to expression, expressed by the venom gland.

It localises to the secreted. It catalyses the reaction Random hydrolysis of (1-&gt;4)-linkages between N-acetyl-beta-D-glucosamine and D-glucuronate residues in hyaluronate.. Its function is as follows. Hydrolyzes high molecular weight hyaluronic acid to produce small oligosaccharides. The polypeptide is Hyaluronidase A (Vespula vulgaris (Yellow jacket)).